The primary structure comprises 330 residues: Beta-ketoacyl-[acyl-carrier-protein] synthase III (330 aa).

Catalysis depends on residues Cys115 and His255. Residues 256–260 (QANFR) form an ACP-binding region. Asn285 is an active-site residue.

This sequence belongs to the thiolase-like superfamily. FabH family. Homodimer.

The protein resides in the cytoplasm. It carries out the reaction malonyl-[ACP] + acetyl-CoA + H(+) = 3-oxobutanoyl-[ACP] + CO2 + CoA. Its pathway is lipid metabolism; fatty acid biosynthesis. Its function is as follows. Catalyzes the condensation reaction of fatty acid synthesis by the addition to an acyl acceptor of two carbons from malonyl-ACP. Catalyzes the first condensation reaction which initiates fatty acid synthesis and may therefore play a role in governing the total rate of fatty acid production. Possesses both acetoacetyl-ACP synthase and acetyl transacylase activities. Its substrate specificity determines the biosynthesis of branched-chain and/or straight-chain of fatty acids. This Helicobacter pylori (strain HPAG1) protein is Beta-ketoacyl-[acyl-carrier-protein] synthase III.